Consider the following 147-residue polypeptide: uncharacterized protein (147 aa).

4 helical membrane passes run 13-33 (LSLV…IIGL), 45-65 (LFVG…AYFL), 80-100 (YLFT…LILI), and 116-136 (WGFF…IIPY).

Its subcellular location is the cell membrane. This is an uncharacterized protein from Methanocaldococcus jannaschii (strain ATCC 43067 / DSM 2661 / JAL-1 / JCM 10045 / NBRC 100440) (Methanococcus jannaschii).